Consider the following 311-residue polypeptide: NEDD4 family-interacting protein 2 (311 aa).

A disordered region spans residues 1 to 133 (RRSASDAELS…PPYSSITVEA (133 aa)). Residues 1-206 (RRSASDAELS…VEQLRVGNDG (206 aa)) lie on the Cytoplasmic side of the membrane. Over residues 7–22 (AELSAGAEGATGSEAA) the composition is skewed to low complexity. The segment covering 26–37 (DLGGRTRGGGRG) has biased composition (gly residues). The span at 38 to 47 (SAAAAATTST) shows a compositional bias: low complexity. A compositionally biased stretch (basic and acidic residues) spans 48–75 (REAEGAERRGDTPARKPDPEAGRMDHHQ). Polar residues predominate over residues 92-101 (ESSAVEQPST). Residues 102–120 (SSLAAPTVEAAASAPALDP) show a composition bias toward low complexity. An interaction with NEDD4 region spans residues 123 to 126 (PPPY). A PPxY motif 1 motif is present at residues 123–126 (PPPY). Phosphotyrosine; by SRC occurs at positions 126, 142, 146, and 152. 2 consecutive short sequence motifs (PPxY motif) follow at residues 149–152 (PPPY) and 159–161 (PTY). Residues 207–227 (IFMLAFFMAFIFNWLGFCLSF) form a helical membrane-spanning segment. The Extracellular portion of the chain corresponds to 228 to 232 (CITNT). A helical transmembrane segment spans residues 233–253 (IAGRYGAICGFGLSLIKWILI). Residues 254–262 (VRFSDYFTG) lie on the Cytoplasmic side of the membrane. The chain crosses the membrane as a helical span at residues 263–283 (YFNGQYWLWWIFLVLGLLLFF). The Extracellular segment spans residues 284–311 (RGFVNYLKVRNMSESMAAAHRTRYFFLL).

Forms heterodimers with NDFIP1. Interacts with HECT domain-containing E3 ubiquitin-protein ligases, including NEDD4. Interacts with NEDD4L. When phosphorylated at Tyr-142, interacts with SRC and LYN SH2 domain. May thus act as a scaffold that recruits SRC to NDFIP1, enhancing NDFIP1 phosphorylation. Interacts with SLC11A2/DMT1. May interact with phosphorylated EGFR. Interacts with KCNH2. Ubiquitinated by NEDD4 and NEDD4L; which does not affect turnover. Also ubiquitinated by ITCH. Post-translationally, undergoes transient tyrosine-phosphorylation following EGF stimulation, most probably catalyzed by SRC. Phosphorylation on Tyr-126, Tyr-146 and Tyr-152 are dependent on the phosphorylation on Tyr-142. Also phosphorylated by LYN and FYN. In terms of tissue distribution, ubiquitously expressed, with highest levels in brain, liver, kidney and testis.

It localises to the endosome membrane. It is found in the golgi apparatus membrane. The protein resides in the endosome. Its subcellular location is the multivesicular body membrane. Functionally, activates HECT domain-containing E3 ubiquitin-protein ligases, including ITCH, NEDD4, NEDD4L, SMURF2, WWP1 and WWP2, and consequently modulates the stability of their targets. As a result, may control many cellular processes. Recruits ITCH, NEDD4 and SMURF2 to endosomal membranes. Negatively regulates KCNH2 potassium channel activity by decreasing its cell-surface expression and interfering with channel maturation through recruitment of NEDD4L to the Golgi apparatus and multivesicular body where it mediates KCNH2 degradation. May modulate EGFR signaling. Together with NDFIP1, limits the cytokine signaling and expansion of effector Th2 T-cells by promoting degradation of JAK1, probably by ITCH- and NEDD4L-mediated ubiquitination. In Mus musculus (Mouse), this protein is NEDD4 family-interacting protein 2 (Ndfip2).